Here is a 197-residue protein sequence, read N- to C-terminus: Histone chaperone asf1b-A (197 aa).

This sequence belongs to the ASF1 family. Interacts with histone H3 and histone H4.

Its subcellular location is the nucleus. Its function is as follows. Histone chaperone that facilitates histone deposition and histone exchange and removal during nucleosome assembly and disassembly. In Danio rerio (Zebrafish), this protein is Histone chaperone asf1b-A (asf1ba).